The primary structure comprises 329 residues: Urease accessory protein UreD 2 (329 aa).

A disordered region spans residues 100–120; that stretch reads YSRPSDSSKFTNGTQSANSNT. Residues 103 to 120 show a composition bias toward polar residues; that stretch reads PSDSSKFTNGTQSANSNT.

The protein belongs to the UreD family. UreD, UreF and UreG form a complex that acts as a GTP-hydrolysis-dependent molecular chaperone, activating the urease apoprotein by helping to assemble the nickel containing metallocenter of UreC. The UreE protein probably delivers the nickel.

The protein localises to the cytoplasm. Its function is as follows. Required for maturation of urease via the functional incorporation of the urease nickel metallocenter. The chain is Urease accessory protein UreD 2 from Psychrobacter cryohalolentis (strain ATCC BAA-1226 / DSM 17306 / VKM B-2378 / K5).